The following is a 232-amino-acid chain: E3 ubiquitin-protein ligase RNF125 (232 aa).

Polar residues predominate over residues 1–10; sequence MGSVLSTDSG. Positions 1–23 are disordered; it reads MGSVLSTDSGKSAPASATARALE. Gly2 carries the N-myristoyl glycine lipid modification. Zn(2+) contacts are provided by Cys37 and Cys40. The RING-type zinc-finger motif lies at 37-76; that stretch reads CAVCLEVLHQPVRTRCGHVFCRSCIATSLKNNKWTCPYCR. The interval 43 to 45 is interaction with the C2HC RNF-type zinc finger; it reads VLH. Zn(2+) contacts are provided by Cys52, His54, Cys57, Cys60, Cys72, Cys75, Cys100, and Cys103. A C2HC RNF-type zinc finger spans residues 100–119; sequence CAECDTLVCLSEMRAHIRTC. Residues 109-113 form an interaction with the RING-type zinc finger region; that stretch reads LSEMR. Residues His115 and Cys119 each contribute to the Zn(2+) site. A linker region region spans residues 120–128; sequence QKYIDKYGP. Residues 210 to 224 form a required for interaction with ubiquitin and for autoubiquitination region; it reads EEALIRRVLDRSLLE.

As to quaternary structure, interacts with UBE2D1. Interacts with VCP/p97; leading to recruit RNF125 to RIGI and promote ubiquitination of RIGI. In terms of processing, autoubiquitinated, leading to its subsequent proteasomal degradation. Predominantly expressed in lymphoid tissues, including bone marrow, spleen and thymus. Also weakly expressed in other tissues. Predominant in the CD4(+) and CD8(+) T-cells, suggesting that it is preferentially confined to T-cells.

It is found in the golgi apparatus membrane. The enzyme catalyses S-ubiquitinyl-[E2 ubiquitin-conjugating enzyme]-L-cysteine + [acceptor protein]-L-lysine = [E2 ubiquitin-conjugating enzyme]-L-cysteine + N(6)-ubiquitinyl-[acceptor protein]-L-lysine.. The protein operates within protein modification; protein ubiquitination. E3 ubiquitin-protein ligase that mediates ubiquitination and subsequent proteasomal degradation of target proteins, such as RIGI, MAVS/IPS1, IFIH1/MDA5, JAK1 and p53/TP53. Acts as a negative regulator of type I interferon production by mediating ubiquitination of RIGI at 'Lys-181', leading to RIGI degradation. Mediates ubiquitination and subsequent degradation of p53/TP53. Mediates ubiquitination and subsequent degradation of JAK1. Acts as a positive regulator of T-cell activation. The protein is E3 ubiquitin-protein ligase RNF125 of Homo sapiens (Human).